We begin with the raw amino-acid sequence, 715 residues long: Nucleolar protein 9 (715 aa).

The segment at 1-52 (MPKPRGRRVQSAFKERVENSEATHENSIAETGSDVEISLHEDQPQTSDNKNQ) is disordered. Residues 13-24 (FKERVENSEATH) show a composition bias toward basic and acidic residues. 8 Pumilio repeats span residues 99 to 134 (ESRG…HIFH), 135 to 170 (QFLG…EIVN), 206 to 243 (QLEP…TMAN), 291 to 326 (LDTK…RSVW), 340 to 377 (SEEA…RLYR), 379 to 415 (YMKD…HILD), 531 to 568 (LPQE…EVLI), and 575 to 613 (NLFQ…RIAS). Residues 688-698 (YQEERAKREGE) show a composition bias toward basic and acidic residues. The disordered stretch occupies residues 688–715 (YQEERAKREGEDLAGSNQKRMKGRGRNR). Positions 706 to 715 (KRMKGRGRNR) are enriched in basic residues.

It belongs to the NOP9 family.

It localises to the nucleus. It is found in the nucleolus. Its function is as follows. RNA-binding nucleolar protein required for pre-rRNA processing. Involved in production of 18S rRNA and assembly of small ribosomal subunit. This Clavispora lusitaniae (strain ATCC 42720) (Yeast) protein is Nucleolar protein 9 (NOP9).